The primary structure comprises 469 residues: MSAVNTPAGFTDFKVADISLAAWGRRETIIAESEMPALMGLRRKYLAEQPLKGAKILGCIHMTIQTAVLIETLVALGAEVRWSSCNIFSTQDQAAASIAAAGIPVFAWKGETEEEYEWCLEQTILKDGQPWDANMILDDGGDLTELLHKKYPAVLDRVHGVTEETTTGVHRLLDMLAKGELKVPAINVNDSVTKSKNDNKYGCRHSLSDAIKRGTDHLLSGKQALVIGYGDVGKGSAQSLRQEGMIVKVTEVDPICAMQACMDGFELVSPFIDGINDGTEASIDKALLGKIDLIVTTTGNVNVCDANMLKALKKRAVVCNIGHFDNEIDTAFMRKNWAWEEVKPQVHKIHRTGAGDFDPQNDDYLILLAEGRLVNLGNATGHPSRIMDGSFANQVLAQIFLFEQKFADLSAEKKAERLTVEVLPKKLDEEVALEMVRGFGGVVTKLTQQQADYIGVTVEGPFKPHAYRY.

Residues Thr-63, Asp-139, and Glu-164 each coordinate substrate. An NAD(+)-binding site is contributed by 165–167 (TTT). The substrate site is built by Lys-194 and Asp-198. NAD(+) contacts are provided by residues Asn-199, 228 to 233 (GYGDVG), Glu-251, Asn-300, 321 to 323 (IGH), and Asn-375.

It belongs to the adenosylhomocysteinase family. NAD(+) is required as a cofactor.

It is found in the cytoplasm. It catalyses the reaction S-adenosyl-L-homocysteine + H2O = L-homocysteine + adenosine. The protein operates within amino-acid biosynthesis; L-homocysteine biosynthesis; L-homocysteine from S-adenosyl-L-homocysteine: step 1/1. Functionally, may play a key role in the regulation of the intracellular concentration of adenosylhomocysteine. In Pseudomonas putida (strain W619), this protein is Adenosylhomocysteinase.